A 365-amino-acid chain; its full sequence is D-alanine--D-alanine ligase (365 aa).

One can recognise an ATP-grasp domain in the interval 135-345 (KLLLKSFNIP…YESLVDNLVS (211 aa)). ATP is bound at residue 168–223 (KQSLNYPVIVKPAMLGSSIGISIAYNDTQIEKCIEEAFEYDLTVVVEKFMKVREIE). Mg(2+) is bound by residues aspartate 298, glutamate 312, and asparagine 314.

Belongs to the D-alanine--D-alanine ligase family. Mg(2+) is required as a cofactor. Mn(2+) serves as cofactor.

The protein localises to the cytoplasm. The enzyme catalyses 2 D-alanine + ATP = D-alanyl-D-alanine + ADP + phosphate + H(+). The protein operates within cell wall biogenesis; peptidoglycan biosynthesis. Its function is as follows. Cell wall formation. This chain is D-alanine--D-alanine ligase, found in Borrelia hermsii (strain HS1 / DAH).